A 959-amino-acid chain; its full sequence is Outer capsid protein VP2 (959 aa).

The protein belongs to the orbivirus VP2 family.

It localises to the virion. Its function is as follows. The VP2 protein is one of the two proteins (with VP5) which constitute the virus particle outer capsid. It is the major target of the host immunogenic response. Responsible for viral attachment to target host cell, probably by binding to sialic acid. This attachment induces virion internalization predominantly through clathrin-dependent endocytosis. This Antilocapra americana (Pronghorn) protein is Outer capsid protein VP2 (Segment-2).